A 525-amino-acid chain; its full sequence is GMP synthase [glutamine-hydrolyzing] (525 aa).

The Glutamine amidotransferase type-1 domain occupies 9 to 207; the sequence is RILILDFGSQ…VLDICQCEAL (199 aa). The active-site Nucleophile is the Cys-86. Catalysis depends on residues His-181 and Glu-183. A GMPS ATP-PPase domain is found at 208–400; that stretch reads WTPAKIIDDA…LGLPYNMLYR (193 aa). 235–241 is an ATP binding site; sequence SGGVDSS.

As to quaternary structure, homodimer.

The catalysed reaction is XMP + L-glutamine + ATP + H2O = GMP + L-glutamate + AMP + diphosphate + 2 H(+). It participates in purine metabolism; GMP biosynthesis; GMP from XMP (L-Gln route): step 1/1. In terms of biological role, catalyzes the synthesis of GMP from XMP. The polypeptide is GMP synthase [glutamine-hydrolyzing] (Pectobacterium atrosepticum (strain SCRI 1043 / ATCC BAA-672) (Erwinia carotovora subsp. atroseptica)).